The sequence spans 138 residues: Transcription antitermination protein NusB (138 aa).

Belongs to the NusB family.

Its function is as follows. Involved in transcription antitermination. Required for transcription of ribosomal RNA (rRNA) genes. Binds specifically to the boxA antiterminator sequence of the ribosomal RNA (rrn) operons. In Helicobacter pylori (strain ATCC 700392 / 26695) (Campylobacter pylori), this protein is Transcription antitermination protein NusB.